The chain runs to 420 residues: Exodeoxyribonuclease 7 large subunit (420 aa).

The protein belongs to the XseA family. As to quaternary structure, heterooligomer composed of large and small subunits.

It is found in the cytoplasm. It carries out the reaction Exonucleolytic cleavage in either 5'- to 3'- or 3'- to 5'-direction to yield nucleoside 5'-phosphates.. In terms of biological role, bidirectionally degrades single-stranded DNA into large acid-insoluble oligonucleotides, which are then degraded further into small acid-soluble oligonucleotides. This is Exodeoxyribonuclease 7 large subunit from Helicobacter pylori (strain HPAG1).